The sequence spans 112 residues: Nitrogen regulatory protein P-II (112 aa).

The residue at position 51 (tyrosine 51) is an O-UMP-tyrosine.

Belongs to the P(II) protein family. As to quaternary structure, homotrimer.

In nitrogen-limiting conditions, when the ratio of Gln to 2-ketoglutarate decreases, P-II is uridylylated to P-II-UMP. P-II-UMP allows the deadenylation of glutamine synthetase (GS), thus activating the enzyme. Conversely, in nitrogen excess P-II is deuridylated and promotes the adenylation of GS. P-II indirectly controls the transcription of the GS gene (glnA). P-II prevents NR-II-catalyzed conversion of NR-I to NR-I-phosphate, the transcriptional activator of glnA. When P-II is uridylylated to P-II-UMP, these events are reversed. The polypeptide is Nitrogen regulatory protein P-II (glnB) (Rhizobium etli (strain ATCC 51251 / DSM 11541 / JCM 21823 / NBRC 15573 / CFN 42)).